A 310-amino-acid chain; its full sequence is Ribonuclease Z (310 aa).

7 residues coordinate Zn(2+): H63, H65, D67, H68, H141, D212, and H270. D67 functions as the Proton acceptor in the catalytic mechanism.

This sequence belongs to the RNase Z family. Homodimer. Zn(2+) is required as a cofactor.

It carries out the reaction Endonucleolytic cleavage of RNA, removing extra 3' nucleotides from tRNA precursor, generating 3' termini of tRNAs. A 3'-hydroxy group is left at the tRNA terminus and a 5'-phosphoryl group is left at the trailer molecule.. Functionally, zinc phosphodiesterase, which displays some tRNA 3'-processing endonuclease activity. Probably involved in tRNA maturation, by removing a 3'-trailer from precursor tRNA. In Limosilactobacillus fermentum (strain NBRC 3956 / LMG 18251) (Lactobacillus fermentum), this protein is Ribonuclease Z.